The primary structure comprises 154 residues: Ecotin-like protein 2 (154 aa).

The protein belongs to the protease inhibitor I11 (ecotin) family.

This Leishmania braziliensis protein is Ecotin-like protein 2.